A 185-amino-acid chain; its full sequence is Inner membrane-spanning protein YciB (185 aa).

The next 5 membrane-spanning stretches (helical) occupy residues 19–39 (LGGV…QIVI), 53–73 (IMAS…EIRY), 76–96 (WKVT…QFQF), 118–138 (TLNF…IYIS), and 149–169 (FKSF…GVYI).

It belongs to the YciB family.

Its subcellular location is the cell inner membrane. Functionally, plays a role in cell envelope biogenesis, maintenance of cell envelope integrity and membrane homeostasis. The polypeptide is Inner membrane-spanning protein YciB (Haemophilus influenzae (strain PittEE)).